The chain runs to 144 residues: Superoxide dismutase [Mn], mitochondrial (144 aa).

The Mn(2+) site is built by His10, His58, and Asp143.

Belongs to the iron/manganese superoxide dismutase family. Homotetramer. Mn(2+) serves as cofactor.

It localises to the mitochondrion matrix. It catalyses the reaction 2 superoxide + 2 H(+) = H2O2 + O2. In terms of biological role, destroys superoxide anion radicals which are normally produced within the cells and which are toxic to biological systems. The protein is Superoxide dismutase [Mn], mitochondrial of Palinurus vulgaris (European spiny lobster).